A 120-amino-acid chain; its full sequence is Protein VraC (120 aa).

This chain is Protein VraC, found in Staphylococcus epidermidis (strain ATCC 35984 / DSM 28319 / BCRC 17069 / CCUG 31568 / BM 3577 / RP62A).